A 273-amino-acid chain; its full sequence is uncharacterized protein (273 aa).

The protein localises to the virion. This is an uncharacterized protein from Acanthamoeba polyphaga (Amoeba).